The chain runs to 651 residues: E3 SUMO-protein ligase PIAS1 (651 aa).

The residue at position 2 (A2) is an N-acetylalanine. The required for interaction with MSX1 stretch occupies residues A2 to L200. The SAP domain maps to V11 to L45. Residues L19–L23 carry the LXXLL motif motif. Glycyl lysine isopeptide (Lys-Gly) (interchain with G-Cter in SUMO2) cross-links involve residues K40 and K46. A Nuclear localization signal motif is present at residues K56–R64. The region spanning H124 to L288 is the PINIT domain. Glycyl lysine isopeptide (Lys-Gly) (interchain with G-Cter in SUMO2) cross-links involve residues K137 and K238. The SP-RING-type zinc finger occupies P320–I405. Zn(2+)-binding residues include C351, H353, C374, and C377. The short motif at K368–K380 is the Nuclear localization signal element. Residue K453 forms a Glycyl lysine isopeptide (Lys-Gly) (interchain with G-Cter in SUMO2) linkage. The segment at L462–E473 is SUMO1-binding. The segment at D465–L511 is disordered. S467, S468, S483, and S485 each carry phosphoserine. Over residues P482–S491 the composition is skewed to low complexity. T487 is modified (phosphothreonine). Phosphoserine is present on residues S488 and S491. K493 participates in a covalent cross-link: Glycyl lysine isopeptide (Lys-Gly) (interchain with G-Cter in SUMO2). Phosphoserine occurs at positions 503, 510, and 522. 2 tandem repeats follow at residues N520–L523 and N557–L560. The 4 X 4 AA repeats of N-T-S-L stretch occupies residues N520 to L615. A 3; approximate repeat occupies S598–L601. A disordered region spans residues S600 to A630. Positions N605–L621 are enriched in low complexity. The stretch at N612–L615 is one 4; approximate repeat.

It belongs to the PIAS family. In terms of assembly, interacts with NR2C1; the interaction promotes its sumoylation. Interacts with DDX21, CSRP2, AXIN1, JUN, SATB2, PLAG1, TP53 and STAT1 (dimer), following IFNA1-stimulation. Interacts with SP3 (preferentially when SUMO-modified). Interacts with KLF8; the interaction results in SUMO ligation and repression of KLF8 transcriptional activity and of its cell cycle progression into G(1) phase. Interacts with CHUK/IKKA; this interaction induces PIAS1 phosphorylation. Interacts with PTK2/FAK1; the interaction promotes its sumoylation. Interacts with SUMO1, UBE2I, NCOA2 and AR. Interacts with NR2C1; the interaction promotes its sumoylation. Interacts with DDX5. Interacts with MTA1. Interacts with PML (isoform PML-12). Interacts with PRDM1. Interacts (via N-terminus) with MSX1 (via C-terminus); the interaction is required for the localization of both proteins to the nuclear periphery and specific binding of MSX1 to the core enhancer region in target gene promoters. Post-translationally, sumoylated. In terms of tissue distribution, expressed in kidney, heart, spleen, brain and cerebellum; weak expression, if any, in liver and lung.

Its subcellular location is the nucleus. It localises to the nucleus speckle. The protein resides in the PML body. It is found in the cytoplasm. The protein localises to the cytoskeleton. The catalysed reaction is S-ubiquitinyl-[E2 ubiquitin-conjugating enzyme]-L-cysteine + [acceptor protein]-L-lysine = [E2 ubiquitin-conjugating enzyme]-L-cysteine + N(6)-ubiquitinyl-[acceptor protein]-L-lysine.. It functions in the pathway protein modification; protein sumoylation. Functionally, functions as an E3-type small ubiquitin-like modifier (SUMO) ligase, stabilizing the interaction between UBE2I and the substrate, and as a SUMO-tethering factor. Catalyzes sumoylation of various proteins, such as CEBPB, MRE11, MTA1, PTK2 and PML. Plays a crucial role as a transcriptional coregulation in various cellular pathways, including the STAT pathway, the p53 pathway and the steroid hormone signaling pathway. In vitro, binds A/T-rich DNA. The effects of this transcriptional coregulation, transactivation or silencing, may vary depending upon the biological context. Mediates sumoylation of MRE11, stabilizing MRE11 on chromatin during end resection. Sumoylates PML (at 'Lys-65' and 'Lys-160') and PML-RAR and promotes their ubiquitin-mediated degradation. PIAS1-mediated sumoylation of PML promotes its interaction with CSNK2A1/CK2 which in turn promotes PML phosphorylation and degradation. Enhances the sumoylation of MTA1 and may participate in its paralog-selective sumoylation. Plays a dynamic role in adipogenesis by promoting the SUMOylation and degradation of CEBPB. Mediates the nuclear mobility and localization of MSX1 to the nuclear periphery, whereby MSX1 is brought into the proximity of target myoblast differentiation factor genes. Also required for the binding of MSX1 to the core enhancer region in target gene promoter regions, independent of its sumoylation activity. Capable of binding to the core enhancer region TAAT box in the MYOD1 gene promoter. The sequence is that of E3 SUMO-protein ligase PIAS1 (Pias1) from Mus musculus (Mouse).